The chain runs to 169 residues: Lipoprotein signal peptidase (169 aa).

The next 4 helical transmembrane spans lie at 10–30 (LPWL…KAFF), 41–61 (VVIP…AFSF), 68–88 (WQRW…VVWL), and 94–114 (GETW…GNLY). Catalysis depends on residues Asp-124 and Asp-143. A helical membrane pass occupies residues 135–155 (YFPAFNLADSAITVGAVMLAL).

Belongs to the peptidase A8 family.

It is found in the cell inner membrane. It carries out the reaction Release of signal peptides from bacterial membrane prolipoproteins. Hydrolyzes -Xaa-Yaa-Zaa-|-(S,diacylglyceryl)Cys-, in which Xaa is hydrophobic (preferably Leu), and Yaa (Ala or Ser) and Zaa (Gly or Ala) have small, neutral side chains.. It functions in the pathway protein modification; lipoprotein biosynthesis (signal peptide cleavage). Its function is as follows. This protein specifically catalyzes the removal of signal peptides from prolipoproteins. The sequence is that of Lipoprotein signal peptidase from Pseudomonas paraeruginosa (strain DSM 24068 / PA7) (Pseudomonas aeruginosa (strain PA7)).